We begin with the raw amino-acid sequence, 297 residues long: Undecaprenyl-diphosphatase (297 aa).

Transmembrane regions (helical) follow at residues 39-59 (PGAAYSAVIQLGTVAAVLIYF), 85-105 (ARLAWFVLVGTLPVGIAGLTL), 113-133 (FRSLYVISGSLIVLALILLVV), 151-171 (GILIGMWQALALIPGASRSGT), 190-210 (SFLLSIPATTLAGVFELKHLL), 220-240 (ALWVGTLVAFASGMAAIAWLL), and 249-269 (LVFVVYRVALGVLLLVLLQTG).

It belongs to the UppP family.

The protein resides in the cell inner membrane. It catalyses the reaction di-trans,octa-cis-undecaprenyl diphosphate + H2O = di-trans,octa-cis-undecaprenyl phosphate + phosphate + H(+). Functionally, catalyzes the dephosphorylation of undecaprenyl diphosphate (UPP). Confers resistance to bacitracin. The protein is Undecaprenyl-diphosphatase of Myxococcus xanthus (strain DK1622).